The primary structure comprises 1115 residues: DNA-directed RNA polymerase subunit beta (1115 aa).

Positions 1084–1115 (HEAGEGEDDEYFEEDEEAVDDEPMTFDDDDME) are disordered. Residues 1088–1115 (EGEDDEYFEEDEEAVDDEPMTFDDDDME) show a composition bias toward acidic residues.

Belongs to the RNA polymerase beta chain family. The RNAP catalytic core consists of 2 alpha, 1 beta, 1 beta' and 1 omega subunit. When a sigma factor is associated with the core the holoenzyme is formed, which can initiate transcription.

It catalyses the reaction RNA(n) + a ribonucleoside 5'-triphosphate = RNA(n+1) + diphosphate. In terms of biological role, DNA-dependent RNA polymerase catalyzes the transcription of DNA into RNA using the four ribonucleoside triphosphates as substrates. The polypeptide is DNA-directed RNA polymerase subunit beta (Desulfitobacterium hafniense (strain DSM 10664 / DCB-2)).